The sequence spans 494 residues: UPF0371 protein str1377 (494 aa).

Belongs to the UPF0371 family.

In Streptococcus thermophilus (strain CNRZ 1066), this protein is UPF0371 protein str1377.